The following is a 1215-amino-acid chain: DNA-directed RNA polymerase subunit beta' (1215 aa).

Residues cysteine 60, cysteine 62, cysteine 75, and cysteine 78 each coordinate Zn(2+). 3 residues coordinate Mg(2+): aspartate 450, aspartate 452, and aspartate 454. Residues cysteine 818, cysteine 892, cysteine 899, and cysteine 902 each coordinate Zn(2+).

Belongs to the RNA polymerase beta' chain family. As to quaternary structure, the RNAP catalytic core consists of 2 alpha, 1 beta, 1 beta' and 1 omega subunit. When a sigma factor is associated with the core the holoenzyme is formed, which can initiate transcription. It depends on Mg(2+) as a cofactor. Zn(2+) is required as a cofactor.

The catalysed reaction is RNA(n) + a ribonucleoside 5'-triphosphate = RNA(n+1) + diphosphate. Functionally, DNA-dependent RNA polymerase catalyzes the transcription of DNA into RNA using the four ribonucleoside triphosphates as substrates. In Streptococcus suis (strain 98HAH33), this protein is DNA-directed RNA polymerase subunit beta'.